The primary structure comprises 371 residues: uncharacterized protein (371 aa).

It to A.pernix APE_1804 and S.solfataricus SSO2105.

This is an uncharacterized protein from Aeropyrum pernix (strain ATCC 700893 / DSM 11879 / JCM 9820 / NBRC 100138 / K1).